A 356-amino-acid polypeptide reads, in one-letter code: uncharacterized protein (356 aa).

This is an uncharacterized protein from Saccharolobus islandicus (Sulfolobus islandicus).